Consider the following 190-residue polypeptide: Large ribosomal subunit protein uL6A (190 aa).

Belongs to the universal ribosomal protein uL6 family. Component of the large ribosomal subunit (LSU). Mature yeast ribosomes consist of a small (40S) and a large (60S) subunit. The 40S small subunit contains 1 molecule of ribosomal RNA (18S rRNA) and at least 33 different proteins. The large 60S subunit contains 3 rRNA molecules (25S, 5.8S and 5S rRNA) and at least 46 different proteins. uL6 lines the binding pocket for eukaryotic elongation factor 2 (eEF2).

Its subcellular location is the cytoplasm. It is found in the nucleus. In terms of biological role, component of the ribosome, a large ribonucleoprotein complex responsible for the synthesis of proteins in the cell. The small ribosomal subunit (SSU) binds messenger RNAs (mRNAs) and translates the encoded message by selecting cognate aminoacyl-transfer RNA (tRNA) molecules. The large subunit (LSU) contains the ribosomal catalytic site termed the peptidyl transferase center (PTC), which catalyzes the formation of peptide bonds, thereby polymerizing the amino acids delivered by tRNAs into a polypeptide chain. The nascent polypeptides leave the ribosome through a tunnel in the LSU and interact with protein factors that function in enzymatic processing, targeting, and the membrane insertion of nascent chains at the exit of the ribosomal tunnel. This chain is Large ribosomal subunit protein uL6A (rpl901), found in Schizosaccharomyces pombe (strain 972 / ATCC 24843) (Fission yeast).